A 454-amino-acid polypeptide reads, in one-letter code: MRSDTREEISAALDAYHASLSRVLDLKCDALTTPELLACLQRLEVERRRQGAAEHALINQLAGQACEEELGGTLRTALANRLHITPGEASRRIAEAEDLGERRALTGEPLPAQLTATAAAQREGKIGREHIKEIQAFFKELSAAVDLGIREAAEAQLAELATSRRPDHLHGLATQLMDWLHPDGNFSDQERARKRGITMGKQEFDGMSRISGLLTPELRATIEAVLAKLAAPGACNPDDQTPLVADTPDADAVRRDTRSQAQRNHDAFLAALRGLLASGELGQHKGLPVTIVVSTTLKELEAATGKGVTGGGSRVPMSDLIRMASHANHYLALFDGAKPLALYHTKRLASPAQRIMLYAKDRGCSRPGCDAPAYHSEVHHVTPWTTTHRTDINDLTLACGPDNRLVEKGWKTRKNAHGDTEWLPPPHLDHGQPRINRYHHPAKILCEQDDDEPH.

Residues 364–405 (CSRPGCDAPAYHSEVHHVTPWTTTHRTDINDLTLACGPDNRL) enclose the HNH domain.

Belongs to the Rv1128c/1148c/1588c/1702c/1945/3466 family.

This is an uncharacterized protein from Mycobacterium tuberculosis (strain CDC 1551 / Oshkosh).